Consider the following 271-residue polypeptide: Undecaprenyl-diphosphatase (271 aa).

8 consecutive transmembrane segments (helical) span residues 5 to 25 (YALFVAFVLGIVEGLTEFLPV), 45 to 65 (AATFEVVIQMGSILAVVAVFW), 86 to 106 (TLSLVHIILGMLPAVIIGLAI), 114 to 134 (LFGPQTVMYALVAGGILLIIA), 149 to 169 (ISYKQALGIGLFQCLALWPGF), 189 to 209 (AAEFSFILAVPMMVAASGLDL), 226 to 246 (VGFITAFVVAMIAIKTFLALI), and 251 to 271 (FIPFAIYRFVVAFAVYLVFVA).

Belongs to the UppP family.

The protein resides in the cell inner membrane. It carries out the reaction di-trans,octa-cis-undecaprenyl diphosphate + H2O = di-trans,octa-cis-undecaprenyl phosphate + phosphate + H(+). Functionally, catalyzes the dephosphorylation of undecaprenyl diphosphate (UPP). Confers resistance to bacitracin. This chain is Undecaprenyl-diphosphatase, found in Aeromonas hydrophila subsp. hydrophila (strain ATCC 7966 / DSM 30187 / BCRC 13018 / CCUG 14551 / JCM 1027 / KCTC 2358 / NCIMB 9240 / NCTC 8049).